The following is a 264-amino-acid chain: SPARC (264 aa).

The signal sequence occupies residues methionine 1–serine 16. The Follistatin-like domain maps to proline 52–cysteine 74. 7 disulfides stabilise this stretch: cysteine 53-cysteine 64, cysteine 58-cysteine 74, cysteine 76-cysteine 110, cysteine 80-cysteine 103, cysteine 92-cysteine 135, cysteine 141-cysteine 228, and cysteine 236-cysteine 252. In terms of domain architecture, Kazal-like spans lysine 68–lysine 137. The N-linked (GlcNAc...) asparagine glycan is linked to asparagine 96. Positions proline 224–glutamate 259 constitute an EF-hand domain. The Ca(2+) site is built by aspartate 237, asparagine 239, aspartate 241, asparagine 243, and glutamate 248. An N-linked (GlcNAc...) asparagine glycan is attached at asparagine 243.

It belongs to the SPARC family. Expressed by body wall and sex muscle cells. Probable association with basement membranes.

Its subcellular location is the secreted. It localises to the extracellular space. The protein resides in the extracellular matrix. The protein localises to the basement membrane. Functionally, has a high affinity for collagen. Affects nematode body morphology and mobility. Essential for C.elegans development and muscle function. The cysteine-rich region could have protease inhibitory activity or may provide the framework for a protein binding module. Probable role in skeletal morphogenesis. The polypeptide is SPARC (ost-1) (Caenorhabditis elegans).